The primary structure comprises 158 residues: SsrA-binding protein (158 aa).

Belongs to the SmpB family.

It localises to the cytoplasm. In terms of biological role, required for rescue of stalled ribosomes mediated by trans-translation. Binds to transfer-messenger RNA (tmRNA), required for stable association of tmRNA with ribosomes. tmRNA and SmpB together mimic tRNA shape, replacing the anticodon stem-loop with SmpB. tmRNA is encoded by the ssrA gene; the 2 termini fold to resemble tRNA(Ala) and it encodes a 'tag peptide', a short internal open reading frame. During trans-translation Ala-aminoacylated tmRNA acts like a tRNA, entering the A-site of stalled ribosomes, displacing the stalled mRNA. The ribosome then switches to translate the ORF on the tmRNA; the nascent peptide is terminated with the 'tag peptide' encoded by the tmRNA and targeted for degradation. The ribosome is freed to recommence translation, which seems to be the essential function of trans-translation. In Roseiflexus castenholzii (strain DSM 13941 / HLO8), this protein is SsrA-binding protein.